We begin with the raw amino-acid sequence, 790 residues long: DNA ligase 1 (790 aa).

Residues 1–64 (MLAIRSSNYL…AFDALMSNAR (64 aa)) constitute a mitochondrion transit peptide. The interval 64–142 (RAAAKKKTPQ…TGAKKAKTLS (79 aa)) is disordered. Residues 68–75 (KKKTPQTT) carry the Nuclear localization signal 1 motif. The segment covering 116–128 (DSANPRSDTSSIA) has biased composition (polar residues). The segment at 337 to 346 (KLRLGFSGQT) is interaction with target DNA. Glutamate 442 contributes to the ATP binding site. The active-site N6-AMP-lysine intermediate is lysine 444. Residues arginine 449 and arginine 465 each coordinate ATP. Residue glutamate 497 coordinates Mg(2+). The short motif at 505-512 (KKKILPFQ) is the Nuclear localization signal 2 element. The interval 518 to 520 (ARK) is interaction with target DNA. Mg(2+) is bound at residue glutamate 596. ATP contacts are provided by lysine 601, arginine 614, and lysine 620. A disordered region spans residues 757–790 (DKKPEEATSSEQIADLYQAQKHNHPSNEVKGDDD). The segment covering 781–790 (PSNEVKGDDD) has biased composition (basic and acidic residues).

The protein belongs to the ATP-dependent DNA ligase family. Mg(2+) is required as a cofactor. In terms of tissue distribution, expressed in all vegetative and reproductive tissues.

The protein resides in the mitochondrion. The protein localises to the nucleus. It catalyses the reaction ATP + (deoxyribonucleotide)n-3'-hydroxyl + 5'-phospho-(deoxyribonucleotide)m = (deoxyribonucleotide)n+m + AMP + diphosphate.. In terms of biological role, essential protein. DNA ligase that seals nicks in double-stranded DNA during DNA replication, DNA recombination and DNA repair. Involved in repair of both single strand breaks (SSBs) and double strand breaks (DSBs). Required in the endosperm for embryogenesis, probably to repair DNA-breaks generated by DME. The polypeptide is DNA ligase 1 (LIG1) (Arabidopsis thaliana (Mouse-ear cress)).